The chain runs to 271 residues: 3-methyl-2-oxobutanoate hydroxymethyltransferase (271 aa).

Positions 51 and 90 each coordinate Mg(2+). 3-methyl-2-oxobutanoate contacts are provided by residues 51–52, D90, and K118; that span reads DS. Residue E120 coordinates Mg(2+). E186 functions as the Proton acceptor in the catalytic mechanism.

The protein belongs to the PanB family. As to quaternary structure, homodecamer; pentamer of dimers. It depends on Mg(2+) as a cofactor.

The protein localises to the cytoplasm. It carries out the reaction 3-methyl-2-oxobutanoate + (6R)-5,10-methylene-5,6,7,8-tetrahydrofolate + H2O = 2-dehydropantoate + (6S)-5,6,7,8-tetrahydrofolate. The protein operates within cofactor biosynthesis; (R)-pantothenate biosynthesis; (R)-pantoate from 3-methyl-2-oxobutanoate: step 1/2. Its function is as follows. Catalyzes the reversible reaction in which hydroxymethyl group from 5,10-methylenetetrahydrofolate is transferred onto alpha-ketoisovalerate to form ketopantoate. The polypeptide is 3-methyl-2-oxobutanoate hydroxymethyltransferase (Xanthomonas euvesicatoria pv. vesicatoria (strain 85-10) (Xanthomonas campestris pv. vesicatoria)).